We begin with the raw amino-acid sequence, 642 residues long: Threonine--tRNA ligase (642 aa).

In terms of domain architecture, TGS spans 1–61 (MPVITLPDGS…HEDASLSIIT (61 aa)). The segment at 243 to 534 (DHRKIGKQLD…LIEEYAGRFP (292 aa)) is catalytic. Positions 334, 385, and 511 each coordinate Zn(2+).

The protein belongs to the class-II aminoacyl-tRNA synthetase family. In terms of assembly, homodimer. Requires Zn(2+) as cofactor.

The protein localises to the cytoplasm. It catalyses the reaction tRNA(Thr) + L-threonine + ATP = L-threonyl-tRNA(Thr) + AMP + diphosphate + H(+). Its function is as follows. Catalyzes the attachment of threonine to tRNA(Thr) in a two-step reaction: L-threonine is first activated by ATP to form Thr-AMP and then transferred to the acceptor end of tRNA(Thr). Also edits incorrectly charged L-seryl-tRNA(Thr). This Shewanella amazonensis (strain ATCC BAA-1098 / SB2B) protein is Threonine--tRNA ligase.